Here is a 158-residue protein sequence, read N- to C-terminus: SsrA-binding protein (158 aa).

The protein belongs to the SmpB family.

Its subcellular location is the cytoplasm. In terms of biological role, required for rescue of stalled ribosomes mediated by trans-translation. Binds to transfer-messenger RNA (tmRNA), required for stable association of tmRNA with ribosomes. tmRNA and SmpB together mimic tRNA shape, replacing the anticodon stem-loop with SmpB. tmRNA is encoded by the ssrA gene; the 2 termini fold to resemble tRNA(Ala) and it encodes a 'tag peptide', a short internal open reading frame. During trans-translation Ala-aminoacylated tmRNA acts like a tRNA, entering the A-site of stalled ribosomes, displacing the stalled mRNA. The ribosome then switches to translate the ORF on the tmRNA; the nascent peptide is terminated with the 'tag peptide' encoded by the tmRNA and targeted for degradation. The ribosome is freed to recommence translation, which seems to be the essential function of trans-translation. The protein is SsrA-binding protein of Glaesserella parasuis serovar 5 (strain SH0165) (Haemophilus parasuis).